A 258-amino-acid polypeptide reads, in one-letter code: Imidazole glycerol phosphate synthase subunit HisF (258 aa).

Residues D11 and D130 contribute to the active site.

The protein belongs to the HisA/HisF family. Heterodimer of HisH and HisF.

Its subcellular location is the cytoplasm. It catalyses the reaction 5-[(5-phospho-1-deoxy-D-ribulos-1-ylimino)methylamino]-1-(5-phospho-beta-D-ribosyl)imidazole-4-carboxamide + L-glutamine = D-erythro-1-(imidazol-4-yl)glycerol 3-phosphate + 5-amino-1-(5-phospho-beta-D-ribosyl)imidazole-4-carboxamide + L-glutamate + H(+). The protein operates within amino-acid biosynthesis; L-histidine biosynthesis; L-histidine from 5-phospho-alpha-D-ribose 1-diphosphate: step 5/9. IGPS catalyzes the conversion of PRFAR and glutamine to IGP, AICAR and glutamate. The HisF subunit catalyzes the cyclization activity that produces IGP and AICAR from PRFAR using the ammonia provided by the HisH subunit. This Photorhabdus laumondii subsp. laumondii (strain DSM 15139 / CIP 105565 / TT01) (Photorhabdus luminescens subsp. laumondii) protein is Imidazole glycerol phosphate synthase subunit HisF.